We begin with the raw amino-acid sequence, 127 residues long: Glycine cleavage system H protein (127 aa).

Residues 24–106 (TATLGISAFA…YGEGWLVKVQ (83 aa)) enclose the Lipoyl-binding domain. The residue at position 65 (K65) is an N6-lipoyllysine.

Belongs to the GcvH family. As to quaternary structure, the glycine cleavage system is composed of four proteins: P, T, L and H. (R)-lipoate serves as cofactor.

Its function is as follows. The glycine cleavage system catalyzes the degradation of glycine. The H protein shuttles the methylamine group of glycine from the P protein to the T protein. The protein is Glycine cleavage system H protein of Thermosynechococcus vestitus (strain NIES-2133 / IAM M-273 / BP-1).